Consider the following 208-residue polypeptide: Small ribosomal subunit protein uS4 (208 aa).

The S4 RNA-binding domain occupies 98 to 161; that stretch reads QRLDNVVFRM…KSNPQVVRAL (64 aa).

It belongs to the universal ribosomal protein uS4 family. Part of the 30S ribosomal subunit. Contacts protein S5. The interaction surface between S4 and S5 is involved in control of translational fidelity.

One of the primary rRNA binding proteins, it binds directly to 16S rRNA where it nucleates assembly of the body of the 30S subunit. Its function is as follows. With S5 and S12 plays an important role in translational accuracy. This Aliarcobacter butzleri (strain RM4018) (Arcobacter butzleri) protein is Small ribosomal subunit protein uS4.